Here is a 1122-residue protein sequence, read N- to C-terminus: Protein phosphatase 1 regulatory subunit 3A (1122 aa).

A disordered region spans residues 32–58 (TFQPGFSPQPSRRGSDSSEDIYLDTPS). A phosphoserine; by GSK3 mark is found at serine 38 and serine 42. A Phosphoserine; by PKA and ISPK modification is found at serine 46. Phosphoserine is present on serine 49. A Phosphothreonine modification is found at threonine 56. Positions 62-65 (RRVS) match the PP1-binding motif motif. A Phosphoserine; by PKA modification is found at serine 65. One can recognise a CBM21 domain in the interval 122–230 (QLQIQKAILE…NNNGTNYTFI (109 aa)). Disordered regions lie at residues 332-351 (STAS…NFPN), 395-422 (SSGD…LGDT), 496-516 (CLKE…NGKD), and 640-668 (GINS…SREN). Basic and acidic residues-rich tracts occupy residues 395 to 405 (SSGDDCTHQPS) and 499 to 516 (ESTE…NGKD). Polar residues predominate over residues 640–662 (GINSEDQDNSPQHKQSWNVLESQ). Phosphoserine is present on serine 844. A compositionally biased stretch (basic and acidic residues) spans 963-977 (IEKHPYPESKPEEVS). Disordered regions lie at residues 963–983 (IEKH…SGIV) and 1025–1058 (RHEN…PVEE). 2 stretches are compositionally biased toward polar residues: residues 1031–1040 (LVSSGQSLYT) and 1048–1058 (SSASTSLPVEE). The helical transmembrane segment at 1078 to 1098 (YFLLFLIFLITVYHYDLMIGL) threads the bilayer.

Interacts with PPP1CC catalytic subunit of PP1, and associates with glycogen. In terms of processing, phosphorylation at Ser-46 by ISPK stimulates the dephosphorylation of glycogen synthase and phosphorylase kinase. As to expression, skeletal muscle and heart.

The protein resides in the membrane. Its function is as follows. Seems to act as a glycogen-targeting subunit for PP1. PP1 is essential for cell division, and participates in the regulation of glycogen metabolism, muscle contractility and protein synthesis. Plays an important role in glycogen synthesis but is not essential for insulin activation of glycogen synthase. In Homo sapiens (Human), this protein is Protein phosphatase 1 regulatory subunit 3A (PPP1R3A).